The following is a 624-amino-acid chain: (-)-beta-phellandrene synthase 4, chloroplastic (624 aa).

The N-terminal 48 residues, 1 to 48 (MAIVSSVPLASKSCLHKSLISSIHKLKPFCRTIPTLGMSRPGKSVMPS), are a transit peptide targeting the chloroplast. The disordered stretch occupies residues 41 to 60 (PGKSVMPSMSMSSPVSDDGV). A compositionally biased stretch (low complexity) spans 44–56 (SVMPSMSMSSPVS). Aspartate 375, aspartate 379, and aspartate 527 together coordinate Mg(2+). A DDXXD motif motif is present at residues 375–379 (DDMYD).

It belongs to the terpene synthase family. Tpsd subfamily. The cofactor is Mg(2+). Requires Mn(2+) as cofactor.

The protein resides in the plastid. It is found in the chloroplast. It carries out the reaction (2E)-geranyl diphosphate = (-)-beta-phellandrene + diphosphate. Its pathway is terpene metabolism; oleoresin biosynthesis. Its function is as follows. Terpene synthase (TPS) involved in the biosynthesis of monoterpene natural products included in conifer oleoresin secretions and volatile emissions; these compounds contribute to biotic and abiotic stress defense against herbivores and pathogens. Catalyzes the conversion of (2E)-geranyl diphosphate (GPP) to (-)-beta-phellandrene. The protein is (-)-beta-phellandrene synthase 4, chloroplastic of Picea sitchensis (Sitka spruce).